The primary structure comprises 326 residues: 3-oxopimeloyl-[acyl-carrier-protein] synthase (326 aa).

Residues C115 and H253 contribute to the active site. Residues 254–258 (QANIR) form an ACP-binding region. Residue N283 is part of the active site.

Belongs to the thiolase-like superfamily. BioZ family.

It catalyses the reaction malonyl-[ACP] + an acyl-CoA + H(+) = a 3-oxoacyl-[ACP] + CO2 + CoA. The enzyme catalyses glutaryl-CoA + malonyl-[ACP] + H(+) = 3-oxo-6-carboxyhexanoyl-[ACP] + CO2 + CoA. It participates in cofactor biosynthesis; biotin biosynthesis. Its function is as follows. Involved in the formation of the biotin precursor pimeloyl-ACP. Catalyzes the condensation of glutaryl-CoA, an intermediate in lysine degradation, with malonyl-ACP to produce 3-oxopimeloyl-ACP. The polypeptide is 3-oxopimeloyl-[acyl-carrier-protein] synthase (Brucella abortus (strain 2308)).